Here is a 141-residue protein sequence, read N- to C-terminus: ER membrane protein complex subunit 5 (141 aa).

Residues 1 to 6 are Cytoplasmic-facing; sequence MSFVSK. Residues 7–27 traverse the membrane as a helical segment; the sequence is LLYTVSALVLFHSGFSSYEFH. Residues 28 to 48 lie on the Lumenal side of the membrane; sequence HLLKLNSLNNAQGAISKLPKD. The helical transmembrane segment at 49 to 69 threads the bilayer; it reads IMYETYAGLILFVLAVFTSFE. Residues 70–141 are Cytoplasmic-facing; sequence KLQYLPIESN…WASNTVKKEK (72 aa).

It belongs to the membrane magnesium transporter (TC 1.A.67) family. As to quaternary structure, component of the ER membrane protein complex (EMC), which is composed of EMC1, EMC2, EMC3, EMC4, EMC5 and EMC6.

Its subcellular location is the endoplasmic reticulum membrane. In terms of biological role, part of the endoplasmic reticulum membrane protein complex (EMC) that enables the energy-independent insertion into endoplasmic reticulum membranes of newly synthesized membrane proteins. Preferentially accommodates proteins with transmembrane domains that are weakly hydrophobic or contain destabilizing features such as charged and aromatic residues. Involved in the cotranslational insertion of multi-pass membrane proteins in which stop-transfer membrane-anchor sequences become ER membrane spanning helices. It is also required for the post-translational insertion of tail-anchored/TA proteins in endoplasmic reticulum membranes. By mediating the proper cotranslational insertion of N-terminal transmembrane domains in an N-exo topology, with translocated N-terminus in the lumen of the ER, controls the topology of multi-pass membrane proteins. This is ER membrane protein complex subunit 5 (EMC5) from Saccharomyces cerevisiae (strain ATCC 204508 / S288c) (Baker's yeast).